The sequence spans 428 residues: Adenylosuccinate synthetase (428 aa).

GTP is bound by residues 12 to 18 (GDEGKGK) and 40 to 42 (GHT). Asp13 serves as the catalytic Proton acceptor. Mg(2+) contacts are provided by Asp13 and Gly40. IMP is bound by residues 13 to 16 (DEGK), 38 to 41 (NAGH), Thr128, Arg142, Gln222, Thr237, and Arg301. The active-site Proton donor is His41. Residue 297-303 (TVTGRSR) coordinates substrate. Residues Arg303, 329-331 (KLD), and 411-413 (STS) contribute to the GTP site.

Belongs to the adenylosuccinate synthetase family. Homodimer. The cofactor is Mg(2+).

It is found in the cytoplasm. It carries out the reaction IMP + L-aspartate + GTP = N(6)-(1,2-dicarboxyethyl)-AMP + GDP + phosphate + 2 H(+). The protein operates within purine metabolism; AMP biosynthesis via de novo pathway; AMP from IMP: step 1/2. In terms of biological role, plays an important role in the de novo pathway of purine nucleotide biosynthesis. Catalyzes the first committed step in the biosynthesis of AMP from IMP. The protein is Adenylosuccinate synthetase of Phenylobacterium zucineum (strain HLK1).